A 136-amino-acid chain; its full sequence is Nucleoside diphosphate kinase (136 aa).

ATP is bound by residues Lys-10, Phe-58, Arg-86, Thr-92, Arg-104, and Asn-114. His-117 serves as the catalytic Pros-phosphohistidine intermediate.

This sequence belongs to the NDK family. Homotetramer. Mg(2+) is required as a cofactor.

The protein resides in the cytoplasm. It catalyses the reaction a 2'-deoxyribonucleoside 5'-diphosphate + ATP = a 2'-deoxyribonucleoside 5'-triphosphate + ADP. The catalysed reaction is a ribonucleoside 5'-diphosphate + ATP = a ribonucleoside 5'-triphosphate + ADP. In terms of biological role, major role in the synthesis of nucleoside triphosphates other than ATP. The ATP gamma phosphate is transferred to the NDP beta phosphate via a ping-pong mechanism, using a phosphorylated active-site intermediate. The chain is Nucleoside diphosphate kinase from Mycobacterium leprae (strain TN).